The chain runs to 297 residues: Acetylglutamate kinase (297 aa).

Substrate is bound by residues 64 to 65 (GG), arginine 86, and asparagine 190.

Belongs to the acetylglutamate kinase family. ArgB subfamily.

It is found in the cytoplasm. The enzyme catalyses N-acetyl-L-glutamate + ATP = N-acetyl-L-glutamyl 5-phosphate + ADP. The protein operates within amino-acid biosynthesis; L-arginine biosynthesis; N(2)-acetyl-L-ornithine from L-glutamate: step 2/4. Functionally, catalyzes the ATP-dependent phosphorylation of N-acetyl-L-glutamate. In Solidesulfovibrio magneticus (strain ATCC 700980 / DSM 13731 / RS-1) (Desulfovibrio magneticus), this protein is Acetylglutamate kinase.